Here is an 86-residue protein sequence, read N- to C-terminus: Serine protease inhibitor Kazal-type 4 (86 aa).

An N-terminal signal peptide occupies residues 1-26 (MAMHLWLVTLTLVPLLGMDRELMVSA). In terms of domain architecture, Kazal-like spans 31 to 86 (FPRMPFCEHMAELPNCPQTPNLICGTDGLTYENECHLCLTRMKTMKDIQIMKDGQC). 3 disulfides stabilise this stretch: Cys37–Cys68, Cys46–Cys65, and Cys54–Cys86.

In terms of tissue distribution, expressed in the intestinal tract.

Its subcellular location is the secreted. This Mus musculus (Mouse) protein is Serine protease inhibitor Kazal-type 4 (Spink4).